Reading from the N-terminus, the 67-residue chain is Large ribosomal subunit protein bL35 (67 aa).

Belongs to the bacterial ribosomal protein bL35 family.

This Mesorhizobium japonicum (strain LMG 29417 / CECT 9101 / MAFF 303099) (Mesorhizobium loti (strain MAFF 303099)) protein is Large ribosomal subunit protein bL35.